We begin with the raw amino-acid sequence, 112 residues long: T cell receptor alpha variable 7 (112 aa).

An N-terminal signal peptide occupies residues 1-21 (MEKMRRPVLIIFCLCLGWANG). Positions 22-112 (ENQVEHSPHF…DSATYFCAVD (91 aa)) constitute an Ig-like domain. A disulfide bridge links Cys-44 with Cys-109. Asn-84 and Asn-90 each carry an N-linked (GlcNAc...) asparagine glycan.

In terms of assembly, alpha-beta TR is a heterodimer composed of an alpha and beta chain; disulfide-linked. The alpha-beta TR is associated with the transmembrane signaling CD3 coreceptor proteins to form the TR-CD3 (TcR or TCR). The assembly of alpha-beta TR heterodimers with CD3 occurs in the endoplasmic reticulum where a single alpha-beta TR heterodimer associates with one CD3D-CD3E heterodimer, one CD3G-CD3E heterodimer and one CD247 homodimer forming a stable octameric structure. CD3D-CD3E and CD3G-CD3E heterodimers preferentially associate with TR alpha and TR beta chains, respectively. The association of the CD247 homodimer is the last step of TcR assembly in the endoplasmic reticulum and is required for transport to the cell surface.

Its subcellular location is the cell membrane. V region of the variable domain of T cell receptor (TR) alpha chain that participates in the antigen recognition. Alpha-beta T cell receptors are antigen specific receptors which are essential to the immune response and are present on the cell surface of T lymphocytes. Recognize peptide-major histocompatibility (MH) (pMH) complexes that are displayed by antigen presenting cells (APC), a prerequisite for efficient T cell adaptive immunity against pathogens. Binding of alpha-beta TR to pMH complex initiates TR-CD3 clustering on the cell surface and intracellular activation of LCK that phosphorylates the ITAM motifs of CD3G, CD3D, CD3E and CD247 enabling the recruitment of ZAP70. In turn ZAP70 phosphorylates LAT, which recruits numerous signaling molecules to form the LAT signalosome. The LAT signalosome propagates signal branching to three major signaling pathways, the calcium, the mitogen-activated protein kinase (MAPK) kinase and the nuclear factor NF-kappa-B (NF-kB) pathways, leading to the mobilization of transcription factors that are critical for gene expression and essential for T cell growth and differentiation. The T cell repertoire is generated in the thymus, by V-(D)-J rearrangement. This repertoire is then shaped by intrathymic selection events to generate a peripheral T cell pool of self-MH restricted, non-autoaggressive T cells. Post-thymic interaction of alpha-beta TR with the pMH complexes shapes TR structural and functional avidity. The chain is T cell receptor alpha variable 7 from Homo sapiens (Human).